The chain runs to 573 residues: LysM domain-containing protein ARB_01155/01156 (573 aa).

A signal peptide spans 1-18 (MIPRNLISGLFLLPFVVA). N-linked (GlcNAc...) asparagine glycosylation is found at Asn-46, Asn-71, and Asn-283. Residues 373–419 (RYYEVVAGDQCNTIALHFGITVDAFLSLNTQIDERCSNLWIAYAYCV) form the LysM domain. The segment at 375-405 (YEVVAGDQCNTIALHFGITVDAFLSLNTQID) is lysM domain.

Its subcellular location is the secreted. Might have a role in sequestration of chitin oligosaccharides (breakdown products of fungal cell walls that are released during invasion and act as triggers of host immunity) to dampen host defense. In Arthroderma benhamiae (strain ATCC MYA-4681 / CBS 112371) (Trichophyton mentagrophytes), this protein is LysM domain-containing protein ARB_01155/01156.